The sequence spans 315 residues: Tyrosine recombinase XerC (315 aa).

The 92-residue stretch at 13–104 folds into the Core-binding (CB) domain; it reads ADLAAAREEW…GVRSLLRHLE (92 aa). A Tyr recombinase domain is found at 125–309; the sequence is SLPKPLTADD…DTQRLLEVYD (185 aa). Catalysis depends on residues arginine 168, lysine 193, histidine 261, arginine 264, and histidine 287. The active-site O-(3'-phospho-DNA)-tyrosine intermediate is tyrosine 296.

It belongs to the 'phage' integrase family. XerC subfamily. Forms a cyclic heterotetrameric complex composed of two molecules of XerC and two molecules of XerD.

It is found in the cytoplasm. In terms of biological role, site-specific tyrosine recombinase, which acts by catalyzing the cutting and rejoining of the recombining DNA molecules. The XerC-XerD complex is essential to convert dimers of the bacterial chromosome into monomers to permit their segregation at cell division. It also contributes to the segregational stability of plasmids. This Brucella suis biovar 1 (strain 1330) protein is Tyrosine recombinase XerC.